Here is a 396-residue protein sequence, read N- to C-terminus: Ribosomal RNA large subunit methyltransferase I (396 aa).

Residues 2–79 (AVRIKLKPGR…REEEIDREFF (78 aa)) form the PUA domain.

Belongs to the methyltransferase superfamily. RlmI family.

The protein localises to the cytoplasm. The enzyme catalyses cytidine(1962) in 23S rRNA + S-adenosyl-L-methionine = 5-methylcytidine(1962) in 23S rRNA + S-adenosyl-L-homocysteine + H(+). In terms of biological role, specifically methylates the cytosine at position 1962 (m5C1962) of 23S rRNA. In Shewanella sp. (strain MR-4), this protein is Ribosomal RNA large subunit methyltransferase I.